The following is a 501-amino-acid chain: DNA nucleotidylexotransferase (501 aa).

The Nuclear localization signal signature appears at 11–17 (KKRKRPV). Residues 24-121 (QVEVKFKEVT…RPVRVETRHS (98 aa)) enclose the BRCT domain. The segment at 249–253 (VGPKT) is involved in DNA binding. Residues 324–329 (GFRRGK) and 333–336 (HDVD) contribute to the a 2'-deoxyribonucleoside 5'-triphosphate site. Mg(2+) contacts are provided by aspartate 334, aspartate 336, and aspartate 426. 441–442 (GW) provides a ligand contact to a 2'-deoxyribonucleoside 5'-triphosphate.

This sequence belongs to the DNA polymerase type-X family. It depends on Mg(2+) as a cofactor.

It is found in the nucleus. The catalysed reaction is DNA(n) + a 2'-deoxyribonucleoside 5'-triphosphate = DNA(n+1) + diphosphate. Its function is as follows. Template-independent DNA polymerase which catalyzes the random addition of deoxynucleoside 5'-triphosphate to the 3'-end of a DNA initiator. One of the in vivo functions of this enzyme is the addition of nucleotides at the junction (N region) of rearranged Ig heavy chain and T-cell receptor gene segments during the maturation of B- and T-cells. The chain is DNA nucleotidylexotransferase (dntt) from Oncorhynchus mykiss (Rainbow trout).